The primary structure comprises 604 residues: Lipoma-preferred partner homolog (604 aa).

2 disordered regions span residues 31 to 96 (TPSI…LDDV) and 129 to 381 (DLES…AFRP). Residues 32–41 (PSISVSTQQT) show a composition bias toward polar residues. Composition is skewed to low complexity over residues 42–53 (PKKFAPVVAPKP) and 143–161 (GSGT…TPVT). Polar residues predominate over residues 207 to 226 (SYTTASTPSRPTFNVQVRTA). Residues 365–377 (SGYPSSGPTSSTP) are compositionally biased toward low complexity. LIM zinc-binding domains follow at residues 406–465 (GRCA…INTL), 466–526 (EQCS…KFAP), and 527–595 (RCSV…RIQA).

This sequence belongs to the zyxin/ajuba family.

It is found in the nucleus. It localises to the cytoplasm. The protein resides in the cell junction. May play a structural role at sites of cell adhesion in maintaining cell shape and motility. May be involved in signal transduction from cell adhesion sites to the nucleus. The sequence is that of Lipoma-preferred partner homolog (LPP) from Gallus gallus (Chicken).